The sequence spans 282 residues: Transcription factor MYB1 (282 aa).

2 HTH myb-type domains span residues 9-61 and 62-116; these read KEGL…LNYL and RPDI…SKKV. DNA-binding regions (H-T-H motif) lie at residues 37–61 and 89–112; these read WRDL…LNYL and WSLI…NTYL. Residues 258–282 are disordered; that stretch reads EDDWKQNGGKDELMGGGNGGPSSVS. The segment covering 260 to 270 has biased composition (basic and acidic residues); the sequence is DWKQNGGKDEL. The segment covering 271–282 has biased composition (gly residues); the sequence is MGGGNGGPSSVS.

The protein resides in the nucleus. Transcription activator involved in the spatiotemporal regulation of flavonoid biosynthesis specifically in the corms of Montbretia. Activates the promoters of enzymes involved in the biosynthesis of the flavonol kaempferol and the flavonol-glycoside kaempferol-rhamnoside. In Crocosmia x crocosmiiflora (Montbretia), this protein is Transcription factor MYB1.